The chain runs to 163 residues: Large ribosomal subunit protein uL10 (163 aa).

The protein belongs to the universal ribosomal protein uL10 family. As to quaternary structure, part of the ribosomal stalk of the 50S ribosomal subunit. The N-terminus interacts with L11 and the large rRNA to form the base of the stalk. The C-terminus forms an elongated spine to which L12 dimers bind in a sequential fashion forming a multimeric L10(L12)X complex.

Functionally, forms part of the ribosomal stalk, playing a central role in the interaction of the ribosome with GTP-bound translation factors. This Histophilus somni (strain 129Pt) (Haemophilus somnus) protein is Large ribosomal subunit protein uL10.